Reading from the N-terminus, the 746-residue chain is NAD(P)H-quinone oxidoreductase subunit 5, chloroplastic (746 aa).

The next 16 membrane-spanning stretches (helical) occupy residues 9–29 (WIIP…LLLF), 40–60 (WTFL…YLSI), 89–109 (IDPL…LVLI), 125–145 (FAYM…SNLI), 147–167 (VYFF…FWFT), 185–205 (GDFG…SFEF), 221–241 (VNLL…IAKS), 258–278 (TPIS…FLVA), 280–300 (LLPL…IGII), 327–347 (LGYM…FHLI), 354–374 (ALLF…VGYS), 396–416 (TAFL…CFWS), 425–445 (LLFS…TAFY), 547–567 (ILFP…IGIP), 608–628 (FSVS…KPFY), and 723–743 (YLFL…FFYF).

It belongs to the complex I subunit 5 family. In terms of assembly, NDH is composed of at least 16 different subunits, 5 of which are encoded in the nucleus.

The protein resides in the plastid. It is found in the chloroplast thylakoid membrane. The catalysed reaction is a plastoquinone + NADH + (n+1) H(+)(in) = a plastoquinol + NAD(+) + n H(+)(out). It catalyses the reaction a plastoquinone + NADPH + (n+1) H(+)(in) = a plastoquinol + NADP(+) + n H(+)(out). Its function is as follows. NDH shuttles electrons from NAD(P)H:plastoquinone, via FMN and iron-sulfur (Fe-S) centers, to quinones in the photosynthetic chain and possibly in a chloroplast respiratory chain. The immediate electron acceptor for the enzyme in this species is believed to be plastoquinone. Couples the redox reaction to proton translocation, and thus conserves the redox energy in a proton gradient. The polypeptide is NAD(P)H-quinone oxidoreductase subunit 5, chloroplastic (ndhF) (Crucihimalaya wallichii (Rock-cress)).